The chain runs to 142 residues: Hemoglobin subunit alpha-A (142 aa).

One can recognise a Globin domain in the interval 2–142; that stretch reads VLSPTDKSIV…VSTVLTSKYR (141 aa). His59 is an O2 binding site. His88 contributes to the heme b binding site.

The protein belongs to the globin family. Heterotetramer of two alpha chains and two beta chains. As to expression, red blood cells.

Involved in oxygen transport from the lung to the various peripheral tissues. The sequence is that of Hemoglobin subunit alpha-A (HBAA) from Otolemur crassicaudatus (Brown greater galago).